The following is a 156-amino-acid chain: Ribosome-binding factor A (156 aa).

The span at 125–138 shows a compositional bias: basic and acidic residues; that stretch reads RVREGAKHAGDPDP. Positions 125–156 are disordered; sequence RVREGAKHAGDPDPYRVGGAEDTDGDTDGDER. Positions 145–156 are enriched in acidic residues; it reads EDTDGDTDGDER.

The protein belongs to the RbfA family. Monomer. Binds 30S ribosomal subunits, but not 50S ribosomal subunits or 70S ribosomes.

It is found in the cytoplasm. One of several proteins that assist in the late maturation steps of the functional core of the 30S ribosomal subunit. Associates with free 30S ribosomal subunits (but not with 30S subunits that are part of 70S ribosomes or polysomes). Required for efficient processing of 16S rRNA. May interact with the 5'-terminal helix region of 16S rRNA. The polypeptide is Ribosome-binding factor A (Mycolicibacterium smegmatis (strain ATCC 700084 / mc(2)155) (Mycobacterium smegmatis)).